Here is a 213-residue protein sequence, read N- to C-terminus: uncharacterized protein (213 aa).

Residues glycine 53, glutamate 74, and aspartate 97 each coordinate S-adenosyl-L-methionine.

Belongs to the methyltransferase superfamily. YrrT family.

In terms of biological role, could be a S-adenosyl-L-methionine-dependent methyltransferase. This is an uncharacterized protein from Bacillus velezensis (strain DSM 23117 / BGSC 10A6 / LMG 26770 / FZB42) (Bacillus amyloliquefaciens subsp. plantarum).